The chain runs to 55 residues: ATP synthase F(0) complex subunit 8 (55 aa).

The chain crosses the membrane as a helical span at residues 7–24 (NPWFYIMLMSWLTFSLII). Positions 35-55 (NPPSNKTSTTTRTLPWTWPWT) are disordered. Residues 41–55 (TSTTTRTLPWTWPWT) are compositionally biased toward low complexity.

This sequence belongs to the ATPase protein 8 family. In terms of assembly, component of the ATP synthase complex composed at least of ATP5F1A/subunit alpha, ATP5F1B/subunit beta, ATP5MC1/subunit c (homooctomer), MT-ATP6/subunit a, MT-ATP8/subunit 8, ATP5ME/subunit e, ATP5MF/subunit f, ATP5MG/subunit g, ATP5MK/subunit k, ATP5MJ/subunit j, ATP5F1C/subunit gamma, ATP5F1D/subunit delta, ATP5F1E/subunit epsilon, ATP5PF/subunit F6, ATP5PB/subunit b, ATP5PD/subunit d, ATP5PO/subunit OSCP. ATP synthase complex consists of a soluble F(1) head domain (subunits alpha(3) and beta(3)) - the catalytic core - and a membrane F(0) domain - the membrane proton channel (subunits c, a, 8, e, f, g, k and j). These two domains are linked by a central stalk (subunits gamma, delta, and epsilon) rotating inside the F1 region and a stationary peripheral stalk (subunits F6, b, d, and OSCP).

It localises to the mitochondrion membrane. Functionally, subunit 8, of the mitochondrial membrane ATP synthase complex (F(1)F(0) ATP synthase or Complex V) that produces ATP from ADP in the presence of a proton gradient across the membrane which is generated by electron transport complexes of the respiratory chain. ATP synthase complex consist of a soluble F(1) head domain - the catalytic core - and a membrane F(1) domain - the membrane proton channel. These two domains are linked by a central stalk rotating inside the F(1) region and a stationary peripheral stalk. During catalysis, ATP synthesis in the catalytic domain of F(1) is coupled via a rotary mechanism of the central stalk subunits to proton translocation. In vivo, can only synthesize ATP although its ATP hydrolase activity can be activated artificially in vitro. Part of the complex F(0) domain. The protein is ATP synthase F(0) complex subunit 8 of Corythaixoides concolor (Grey go-away-bird).